The sequence spans 617 residues: Procollagen galactosyltransferase 1 (617 aa).

Positions 1–31 (MAALPRGSRGLPLLPLLLLLPPLGGPRGADG) are cleaved as a signal peptide. 3 N-linked (GlcNAc...) asparagine glycosylation sites follow: N91, N179, and N376. A compositionally biased stretch (basic and acidic residues) spans 582-601 (DRAKSQKMREQQALSREAKN). The interval 582–617 (DRAKSQKMREQQALSREAKNSDVLQSPLDSTARDEL) is disordered. A Prevents secretion from ER motif is present at residues 614-617 (RDEL).

Belongs to the glycosyltransferase 25 family. In terms of processing, N-glycosylated.

The protein resides in the endoplasmic reticulum lumen. The catalysed reaction is (5R)-5-hydroxy-L-lysyl-[collagen] + UDP-alpha-D-galactose = (5R)-5-O-(beta-D-galactosyl)-5-hydroxy-L-lysyl-[collagen] + UDP + H(+). Functionally, beta-galactosyltransferase that transfers beta-galactose to hydroxylysine residues of type I collagen. By acting on collagen glycosylation, facilitates the formation of collagen triple helix. Also involved in the biosynthesis of collagen type IV. The protein is Procollagen galactosyltransferase 1 (Colgalt1) of Mus musculus (Mouse).